The following is a 116-amino-acid chain: Putative superoxide reductase (116 aa).

Fe cation contacts are provided by His-20, His-46, His-52, Cys-101, and His-104.

The protein belongs to the desulfoferrodoxin family. The cofactor is Fe cation.

The catalysed reaction is reduced [rubredoxin] + superoxide + 2 H(+) = oxidized [rubredoxin] + H2O2. Functionally, uses electrons from reduced NADP, by way of rubredoxin and an oxidoreductase, to catalyze the reduction of superoxide to hydrogen peroxide. This chain is Putative superoxide reductase, found in Methanocaldococcus jannaschii (strain ATCC 43067 / DSM 2661 / JAL-1 / JCM 10045 / NBRC 100440) (Methanococcus jannaschii).